Consider the following 356-residue polypeptide: Holliday junction branch migration complex subunit RuvB (356 aa).

The span at 1-14 (MAIVSSITNHSSLP) shows a compositional bias: polar residues. The tract at residues 1-20 (MAIVSSITNHSSLPNDKGEE) is disordered. The interval 13–201 (LPNDKGEERL…FGITQRLDFY (189 aa)) is large ATPase domain (RuvB-L). Residues Leu40, Arg41, Gly82, Lys85, Thr86, Thr87, Arg191, Tyr201, and Arg238 each contribute to the ATP site. Thr86 contacts Mg(2+). Residues 202-273 (NYLDLENIIK…VVNDALDLHR (72 aa)) are small ATPAse domain (RuvB-S). A head domain (RuvB-H) region spans residues 276–356 (QRGLDATDRS…LLTSPNNIDK (81 aa)). Positions 331 and 336 each coordinate DNA.

This sequence belongs to the RuvB family. Homohexamer. Forms an RuvA(8)-RuvB(12)-Holliday junction (HJ) complex. HJ DNA is sandwiched between 2 RuvA tetramers; dsDNA enters through RuvA and exits via RuvB. An RuvB hexamer assembles on each DNA strand where it exits the tetramer. Each RuvB hexamer is contacted by two RuvA subunits (via domain III) on 2 adjacent RuvB subunits; this complex drives branch migration. In the full resolvosome a probable DNA-RuvA(4)-RuvB(12)-RuvC(2) complex forms which resolves the HJ.

Its subcellular location is the cytoplasm. It carries out the reaction ATP + H2O = ADP + phosphate + H(+). Its function is as follows. The RuvA-RuvB-RuvC complex processes Holliday junction (HJ) DNA during genetic recombination and DNA repair, while the RuvA-RuvB complex plays an important role in the rescue of blocked DNA replication forks via replication fork reversal (RFR). RuvA specifically binds to HJ cruciform DNA, conferring on it an open structure. The RuvB hexamer acts as an ATP-dependent pump, pulling dsDNA into and through the RuvAB complex. RuvB forms 2 homohexamers on either side of HJ DNA bound by 1 or 2 RuvA tetramers; 4 subunits per hexamer contact DNA at a time. Coordinated motions by a converter formed by DNA-disengaged RuvB subunits stimulates ATP hydrolysis and nucleotide exchange. Immobilization of the converter enables RuvB to convert the ATP-contained energy into a lever motion, pulling 2 nucleotides of DNA out of the RuvA tetramer per ATP hydrolyzed, thus driving DNA branch migration. The RuvB motors rotate together with the DNA substrate, which together with the progressing nucleotide cycle form the mechanistic basis for DNA recombination by continuous HJ branch migration. Branch migration allows RuvC to scan DNA until it finds its consensus sequence, where it cleaves and resolves cruciform DNA. The polypeptide is Holliday junction branch migration complex subunit RuvB (Prochlorococcus marinus (strain NATL2A)).